Consider the following 373-residue polypeptide: Alanine racemase (373 aa).

Lys40 functions as the Proton acceptor; specific for D-alanine in the catalytic mechanism. At Lys40 the chain carries N6-(pyridoxal phosphate)lysine. Residue Arg140 coordinates substrate. Tyr268 functions as the Proton acceptor; specific for L-alanine in the catalytic mechanism. Met315 lines the substrate pocket.

The protein belongs to the alanine racemase family. Requires pyridoxal 5'-phosphate as cofactor.

It carries out the reaction L-alanine = D-alanine. It functions in the pathway amino-acid biosynthesis; D-alanine biosynthesis; D-alanine from L-alanine: step 1/1. In terms of biological role, catalyzes the interconversion of L-alanine and D-alanine. May also act on other amino acids. The chain is Alanine racemase (alr) from Limosilactobacillus fermentum (strain NBRC 3956 / LMG 18251) (Lactobacillus fermentum).